Here is a 217-residue protein sequence, read N- to C-terminus: Large ribosomal subunit protein uL3 (217 aa).

A disordered region spans residues 135–154 (ATHGNSLSHRAPGSIGQCQT). Gln-153 is modified (N5-methylglutamine).

The protein belongs to the universal ribosomal protein uL3 family. In terms of assembly, part of the 50S ribosomal subunit. Forms a cluster with proteins L14 and L19. Post-translationally, methylated by PrmB.

In terms of biological role, one of the primary rRNA binding proteins, it binds directly near the 3'-end of the 23S rRNA, where it nucleates assembly of the 50S subunit. The chain is Large ribosomal subunit protein uL3 from Coxiella burnetii (strain CbuG_Q212) (Coxiella burnetii (strain Q212)).